Here is a 354-residue protein sequence, read N- to C-terminus: Selenide, water dikinase (354 aa).

Cys23 is a catalytic residue. ATP-binding positions include Lys26 and 54–56 (TSD). Asp57 serves as a coordination point for Mg(2+). ATP-binding positions include Asp74, Asp97, and 145–147 (GHS). Position 97 (Asp97) interacts with Mg(2+). Asp233 is a Mg(2+) binding site.

Belongs to the selenophosphate synthase 1 family. Class I subfamily. As to quaternary structure, homodimer. Requires Mg(2+) as cofactor.

It catalyses the reaction hydrogenselenide + ATP + H2O = selenophosphate + AMP + phosphate + 2 H(+). Its function is as follows. Synthesizes selenophosphate from selenide and ATP. The sequence is that of Selenide, water dikinase from Burkholderia ambifaria (strain MC40-6).